Reading from the N-terminus, the 1413-residue chain is DNA-directed RNA polymerase subunit beta' (1413 aa).

Residues cysteine 70, cysteine 72, cysteine 85, and cysteine 88 each contribute to the Zn(2+) site. Aspartate 460, aspartate 462, and aspartate 464 together coordinate Mg(2+). Zn(2+) is bound by residues cysteine 814, cysteine 888, cysteine 895, and cysteine 898.

This sequence belongs to the RNA polymerase beta' chain family. In terms of assembly, the RNAP catalytic core consists of 2 alpha, 1 beta, 1 beta' and 1 omega subunit. When a sigma factor is associated with the core the holoenzyme is formed, which can initiate transcription. Mg(2+) is required as a cofactor. Zn(2+) serves as cofactor.

The enzyme catalyses RNA(n) + a ribonucleoside 5'-triphosphate = RNA(n+1) + diphosphate. In terms of biological role, DNA-dependent RNA polymerase catalyzes the transcription of DNA into RNA using the four ribonucleoside triphosphates as substrates. This Bordetella avium (strain 197N) protein is DNA-directed RNA polymerase subunit beta'.